The sequence spans 85 residues: Sugar transporter SemiSWEET (85 aa).

Positions 2 to 59 (ENLIGYVAAFLTTVSFLPQVLRVVMTKQTRDISRNMYIMFFLGVVLWFVYGILRSDLP) constitute a PQ-loop domain. 3 helical membrane-spanning segments follow: residues 5-25 (IGYVAAFLTTVSFLPQVLRVV), 33-53 (ISRNMYIMFFLGVVLWFVYGI), and 57-77 (DLPIILANVVTLFFVTIILYY).

Homodimer.

The protein resides in the cell membrane. The homodimer mediates transmembrane sugar transport down a concentration gradient. Transport is probably effected by rocking-type movements, where a cargo-binding cavity opens first on one and then on the other side of the membrane. This is Sugar transporter SemiSWEET from Leptospira biflexa serovar Patoc (strain Patoc 1 / ATCC 23582 / Paris).